We begin with the raw amino-acid sequence, 500 residues long: MEAARPPPTAGKFVVVGGGIAGVTCAEQLATHFPSEDILLVTASPVIKAVTNFKQISKILEEFDVEEQSSTMLGKRFPNIKVIESGVKQLKSEEHCIVTEDGNQHVYKKLCLCAGAKPKLICEGNPYVLGIRDTDSAQEFQKQLTKAKRIMIIGNGGIALELVYEIEGCEVIWAIKDKAIGNTFFDAGAAEFLTSKLIAEKSEAKIAHKRTRYTTEGRKKEARSKSKADNVGSALGPDWHEGLNLKGTKEFSHKIHLETMCEVKKIYLQDEFRILKKKSFTFPRDHKSVTADTEMWPVYVELTNEKIYGCDFIVSATGVTPNVEPFLHGNSFDLGEDGGLKVDDHMHTSLPDIYAAGDICTTSWQLSPVWQQMRLWTQARQMGWYAAKCMAAASSGDSIDMDFSFELFAHVTKFFNYKVVLLGKYNAQGLGSDHELMLRCTKGREYIKVVMQNGRMMGAVLIGETDLEETFENLILNQMNLSSYGEDLLDPNIDIEDYFD.

Methionine 1 is subject to N-acetylmethionine. The segment at 211–235 (TRYTTEGRKKEARSKSKADNVGSAL) is disordered. Basic and acidic residues predominate over residues 213-228 (YTTEGRKKEARSKSKA).

This sequence belongs to the class-I pyridine nucleotide-disulfide oxidoreductase family. PYROXD1 subfamily. Requires FAD as cofactor.

The protein localises to the nucleus. It localises to the cytoplasm. Its subcellular location is the myofibril. The protein resides in the sarcomere. In terms of biological role, probable FAD-dependent oxidoreductase; involved in the cellular oxidative stress response. Required for normal sarcomere structure and muscle fiber integrity. This chain is Pyridine nucleotide-disulfide oxidoreductase domain-containing protein 1 (PYROXD1), found in Homo sapiens (Human).